We begin with the raw amino-acid sequence, 592 residues long: Movement and RNA silencing protein VP6 (592 aa).

Residues 450-469 form a disordered region; sequence SSDEENADDPNQGWNGTPVH.

The protein localises to the host cell junction. It is found in the host plasmodesma. Functionally, transports viral genome to neighboring plant cells directly through plasmosdesmata, without any budding. The movement protein allows efficient cell to cell propagation, by bypassing the host cell wall barrier. Displays sequence non-specific nucleic acid binding activity. Acts as a suppressor of RNA-mediated gene silencing, also known as post-transcriptional gene silencing (PTGS), a mechanism of plant viral defense that limits the accumulation of viral RNAs. The sequence is that of Movement and RNA silencing protein VP6 from Oryza latifolia (Indian wild rice).